The primary structure comprises 384 residues: Deoxyguanosinetriphosphate triphosphohydrolase-like protein (384 aa).

The region spanning 62 to 198 (RLTHSLEVST…AALADDISYI (137 aa)) is the HD domain.

Belongs to the dGTPase family. Type 2 subfamily.

This is Deoxyguanosinetriphosphate triphosphohydrolase-like protein from Rickettsia conorii (strain ATCC VR-613 / Malish 7).